The sequence spans 182 residues: Large ribosomal subunit protein uL5 (182 aa).

It belongs to the universal ribosomal protein uL5 family. As to quaternary structure, part of the 50S ribosomal subunit; part of the 5S rRNA/L5/L18/L25 subcomplex. Contacts the 5S rRNA and the P site tRNA. Forms a bridge to the 30S subunit in the 70S ribosome.

In terms of biological role, this is one of the proteins that bind and probably mediate the attachment of the 5S RNA into the large ribosomal subunit, where it forms part of the central protuberance. In the 70S ribosome it contacts protein S13 of the 30S subunit (bridge B1b), connecting the 2 subunits; this bridge is implicated in subunit movement. Contacts the P site tRNA; the 5S rRNA and some of its associated proteins might help stabilize positioning of ribosome-bound tRNAs. The sequence is that of Large ribosomal subunit protein uL5 from Mycoplasma mobile (strain ATCC 43663 / 163K / NCTC 11711) (Mesomycoplasma mobile).